The primary structure comprises 87 residues: uncharacterized protein (87 aa).

It to A.fulgidus AF_1348 and AF_1363.

This is an uncharacterized protein from Archaeoglobus fulgidus (strain ATCC 49558 / DSM 4304 / JCM 9628 / NBRC 100126 / VC-16).